Here is a 502-residue protein sequence, read N- to C-terminus: ATP synthase subunit alpha 1/3 (502 aa).

169–176 is a binding site for ATP; sequence GDRQTGKT.

The protein belongs to the ATPase alpha/beta chains family. In terms of assembly, F-type ATPases have 2 components, CF(1) - the catalytic core - and CF(0) - the membrane proton channel. CF(1) has five subunits: alpha(3), beta(3), gamma(1), delta(1), epsilon(1). CF(0) has three main subunits: a(1), b(2) and c(9-12). The alpha and beta chains form an alternating ring which encloses part of the gamma chain. CF(1) is attached to CF(0) by a central stalk formed by the gamma and epsilon chains, while a peripheral stalk is formed by the delta and b chains.

It localises to the cell inner membrane. The enzyme catalyses ATP + H2O + 4 H(+)(in) = ADP + phosphate + 5 H(+)(out). Its function is as follows. Produces ATP from ADP in the presence of a proton gradient across the membrane. The alpha chain is a regulatory subunit. The protein is ATP synthase subunit alpha 1/3 of Syntrophotalea carbinolica (strain DSM 2380 / NBRC 103641 / GraBd1) (Pelobacter carbinolicus).